A 382-amino-acid polypeptide reads, in one-letter code: Gap junction alpha-1 protein (382 aa).

At 2 to 23 (GDWSALGKLLDKVQAYSTAGGK) the chain is on the cytoplasmic side. Residue Ser-5 is modified to Phosphoserine. A helical membrane pass occupies residues 24–44 (VWLSVLFIFRILLLGTAVESA). Over 45 to 76 (WGDEQSAFRCNTQQPGCENVCYDKSFPISHVR) the chain is Extracellular. 2 disulfide bridges follow: Cys-54-Cys-192 and Cys-187-Cys-198. A helical transmembrane segment spans residues 77–97 (FWVLQIIFVSVPTLLYLAHVF). Topologically, residues 98–155 (YVMRKEEKLNKKEEELKVAQTDGVNVEMHLKQIEIKKFKYGIEEHGKVKMRGGLLRTY) are cytoplasmic. A Glycyl lysine isopeptide (Lys-Gly) (interchain with G-Cter in SUMO) cross-link involves residue Lys-144. The helical transmembrane segment at 156–176 (IISILFKSVFEVAFLLIQWYI) threads the bilayer. Over 177–207 (YGFSLSAVYTCKRDPCPHQVDCFLSRPTEKT) the chain is Extracellular. Residues 208–228 (IFIIFMLVVSLVSLALNIIEL) traverse the membrane as a helical segment. Residues 229 to 382 (FYVFFKGVKD…SRPRPDDLEI (154 aa)) lie on the Cytoplasmic side of the membrane. Lys-237 participates in a covalent cross-link: Glycyl lysine isopeptide (Lys-Gly) (interchain with G-Cter in SUMO). The segment at 244–382 (SDPYHATTGP…SRPRPDDLEI (139 aa)) is interaction with NOV. Position 247 is a phosphotyrosine (Tyr-247). Ser-255, Ser-257, and Ser-262 each carry phosphoserine. The interaction with UBQLN4 stretch occupies residues 264-382 (KYAYFNGCSS…SRPRPDDLEI (119 aa)). The residue at position 271 (Cys-271) is an S-nitrosocysteine. Position 275 is a phosphothreonine (Thr-275). 3 positions are modified to phosphoserine: Ser-306, Ser-314, and Ser-325. Over residues 317–332 (QNRMGQAGSTISNSHA) the composition is skewed to polar residues. Positions 317-382 (QNRMGQAGST…SRPRPDDLEI (66 aa)) are disordered. A Phosphothreonine modification is found at Thr-326. Residues Ser-328, Ser-330, Ser-341, and Ser-365 each carry the phosphoserine modification. The segment covering 362 to 374 (RPSSRASSRASSR) has biased composition (low complexity). Ser-368 carries the phosphoserine; by PKC/PRKCG and PKC/PRKCD modification. Phosphoserine is present on residues Ser-369 and Ser-373.

The protein belongs to the connexin family. Alpha-type (group II) subfamily. In terms of assembly, a connexon is composed of a hexamer of connexins. Interacts with CSNK1D. Interacts with RIC1/CIP150. Interacts (via C-terminus) with TJP1. Interacts (via C-terminus) with SRC (via SH3 domain). Interacts (not ubiquitinated) with UBQLN4 (via UBA domain). Interacts with CNST. Interacts with SGSM3. Interacts with NOV. Interacts with TMEM65. Interacts with ANK3/ANKG and PKP2. Phosphorylation at Ser-325, Ser-328 and Ser-330 by CK1 modulates gap junction assembly. Phosphorylated at Ser-368 by PRKCG; phosphorylation induces disassembly of gap junction plaques and inhibition of gap junction activity. Phosphorylation at Ser-368 by PRKCD triggers its internalization into small vesicles leading to proteasome-mediated degradation. In terms of processing, sumoylated with SUMO1, SUMO2 and SUMO3, which may regulate the level of functional Cx43 gap junctions at the plasma membrane. May be desumoylated by SENP1 or SENP2. Post-translationally, acetylated in the developing cortex; leading to delocalization from the cell membrane. S-nitrosylation at Cys-271 is enriched at the muscle endothelial gap junction in arteries, it augments channel permeability and may regulate of smooth muscle cell to endothelial cell communication. As to expression, expressed in heart, non-sensory epithelial cells, and in fibrocytes of the spiral ligament and the spiral limbus. Expressed in bladder smooth muscle cells (at protein level). Expressed in astrocytes (at protein level).

The protein localises to the cell membrane. It localises to the cell junction. It is found in the gap junction. The protein resides in the endoplasmic reticulum. Functionally, gap junction protein that acts as a regulator of bladder capacity. A gap junction consists of a cluster of closely packed pairs of transmembrane channels, the connexons, through which materials of low MW diffuse from one cell to a neighboring cell. Negative regulator of bladder functional capacity: acts by enhancing intercellular electrical and chemical transmission, thus sensitizing bladder muscles to cholinergic neural stimuli and causing them to contract. May play a role in cell growth inhibition through the regulation of NOV expression and localization. Plays an essential role in gap junction communication in the ventricles. In terms of biological role, connexin 43 is possibly the ATP-induced pore of mouse macrophages. This chain is Gap junction alpha-1 protein (Gja1), found in Mus musculus (Mouse).